The primary structure comprises 310 residues: 4-hydroxy-3-methylbut-2-enyl diphosphate reductase (310 aa).

Cys13 serves as a coordination point for [4Fe-4S] cluster. The (2E)-4-hydroxy-3-methylbut-2-enyl diphosphate site is built by His42 and His75. Dimethylallyl diphosphate-binding residues include His42 and His75. His42 and His75 together coordinate isopentenyl diphosphate. Cys97 is a [4Fe-4S] cluster binding site. His125 contributes to the (2E)-4-hydroxy-3-methylbut-2-enyl diphosphate binding site. His125 contacts dimethylallyl diphosphate. Position 125 (His125) interacts with isopentenyl diphosphate. Glu127 (proton donor) is an active-site residue. Thr165 contacts (2E)-4-hydroxy-3-methylbut-2-enyl diphosphate. Cys195 serves as a coordination point for [4Fe-4S] cluster. Residues Ser223, Ser224, Asn225, and Ser267 each contribute to the (2E)-4-hydroxy-3-methylbut-2-enyl diphosphate site. 4 residues coordinate dimethylallyl diphosphate: Ser223, Ser224, Asn225, and Ser267. 4 residues coordinate isopentenyl diphosphate: Ser223, Ser224, Asn225, and Ser267.

Belongs to the IspH family. The cofactor is [4Fe-4S] cluster.

It catalyses the reaction isopentenyl diphosphate + 2 oxidized [2Fe-2S]-[ferredoxin] + H2O = (2E)-4-hydroxy-3-methylbut-2-enyl diphosphate + 2 reduced [2Fe-2S]-[ferredoxin] + 2 H(+). The enzyme catalyses dimethylallyl diphosphate + 2 oxidized [2Fe-2S]-[ferredoxin] + H2O = (2E)-4-hydroxy-3-methylbut-2-enyl diphosphate + 2 reduced [2Fe-2S]-[ferredoxin] + 2 H(+). It participates in isoprenoid biosynthesis; dimethylallyl diphosphate biosynthesis; dimethylallyl diphosphate from (2E)-4-hydroxy-3-methylbutenyl diphosphate: step 1/1. It functions in the pathway isoprenoid biosynthesis; isopentenyl diphosphate biosynthesis via DXP pathway; isopentenyl diphosphate from 1-deoxy-D-xylulose 5-phosphate: step 6/6. Its function is as follows. Catalyzes the conversion of 1-hydroxy-2-methyl-2-(E)-butenyl 4-diphosphate (HMBPP) into a mixture of isopentenyl diphosphate (IPP) and dimethylallyl diphosphate (DMAPP). Acts in the terminal step of the DOXP/MEP pathway for isoprenoid precursor biosynthesis. This is 4-hydroxy-3-methylbut-2-enyl diphosphate reductase from Chlamydia pneumoniae (Chlamydophila pneumoniae).